A 504-amino-acid polypeptide reads, in one-letter code: Glycerol kinase (504 aa).

T16 is a binding site for ADP. Residues T16 and T17 each coordinate ATP. T16 provides a ligand contact to sn-glycerol 3-phosphate. R20 serves as a coordination point for ADP. Positions 86, 87, 138, and 247 each coordinate sn-glycerol 3-phosphate. Residues R86, E87, Y138, D247, and Q248 each contribute to the glycerol site. Residues T269 and G316 each contribute to the ADP site. ATP contacts are provided by T269, G316, Q320, and G417. Positions 417 and 421 each coordinate ADP.

The protein belongs to the FGGY kinase family.

The catalysed reaction is glycerol + ATP = sn-glycerol 3-phosphate + ADP + H(+). Its pathway is polyol metabolism; glycerol degradation via glycerol kinase pathway; sn-glycerol 3-phosphate from glycerol: step 1/1. Inhibited by fructose 1,6-bisphosphate (FBP). Its function is as follows. Key enzyme in the regulation of glycerol uptake and metabolism. Catalyzes the phosphorylation of glycerol to yield sn-glycerol 3-phosphate. This chain is Glycerol kinase, found in Trichodesmium erythraeum (strain IMS101).